The following is a 295-amino-acid chain: Elongation factor Ts (295 aa).

The segment at 79-82 (TDFV) is involved in Mg(2+) ion dislocation from EF-Tu.

Belongs to the EF-Ts family.

It is found in the cytoplasm. In terms of biological role, associates with the EF-Tu.GDP complex and induces the exchange of GDP to GTP. It remains bound to the aminoacyl-tRNA.EF-Tu.GTP complex up to the GTP hydrolysis stage on the ribosome. The chain is Elongation factor Ts from Bacillus mycoides (strain KBAB4) (Bacillus weihenstephanensis).